The chain runs to 470 residues: 3-isopropylmalate dehydratase large subunit (470 aa).

[4Fe-4S] cluster-binding residues include cysteine 349, cysteine 409, and cysteine 412.

It belongs to the aconitase/IPM isomerase family. LeuC type 1 subfamily. As to quaternary structure, heterodimer of LeuC and LeuD. Requires [4Fe-4S] cluster as cofactor.

The catalysed reaction is (2R,3S)-3-isopropylmalate = (2S)-2-isopropylmalate. It participates in amino-acid biosynthesis; L-leucine biosynthesis; L-leucine from 3-methyl-2-oxobutanoate: step 2/4. Catalyzes the isomerization between 2-isopropylmalate and 3-isopropylmalate, via the formation of 2-isopropylmaleate. In Koribacter versatilis (strain Ellin345), this protein is 3-isopropylmalate dehydratase large subunit.